We begin with the raw amino-acid sequence, 97 residues long: RNA-binding protein Hfq (97 aa).

Residues 10–70 (DPFLNALRKE…ISTIVPARSV (61 aa)) form the Sm domain. A disordered region spans residues 75–97 (ENRPQAAPASTLVQVETVQQPAE). Positions 85-97 (TLVQVETVQQPAE) are enriched in polar residues.

Belongs to the Hfq family. As to quaternary structure, homohexamer.

Its function is as follows. RNA chaperone that binds small regulatory RNA (sRNAs) and mRNAs to facilitate mRNA translational regulation in response to envelope stress, environmental stress and changes in metabolite concentrations. Also binds with high specificity to tRNAs. This is RNA-binding protein Hfq from Neisseria meningitidis serogroup C / serotype 2a (strain ATCC 700532 / DSM 15464 / FAM18).